A 515-amino-acid polypeptide reads, in one-letter code: MQDTILEYGGQRSKIPKLWEKFSKKRSPYLDRAKHFAKLTLPYLMNNKGDNETSQNGWQGVGAQATNHLANKLAQVLFPAQRSFFRVDLTAKGEKVLDDRGLKKTQLATIFARVETTAMKALEQRQFRPAIVEVFKHLIVAGNCLLYKPSKGAMSAVPMHHYVVNRDTNGDLMDVILLQEKALRTFDPATRMAIEVGMKGKKCKEDDNVKLYTHAQYAGEGFWKINQSADDIPVGKESRIKSEKLPFIPLTWKRSYGEDWGRPLAEDYSGDLFVIQFLSEAMARGAALMADIKYLIRPGSQTDVDHFVNSGTGEVITGVAEDIHIVQLGKYADLTPISAVLEVYTRRIGVIFMMETMTRRDAERVTAVEIQRDALEIEQNMGGVYSLFAMTMQTPIAMWGLQEAGDSFTSELVDPVIVTGIEALGRMAELDKLANFAQYMSLPQTWPEPAQRAIRWGDYMDWVRGQISAELPFLKSEEEMQQEMAQQAQAQQEAMLNEGVAKAVPGVIQQEMKEG.

It belongs to the podoviridae head-to-tail connector protein family. As to quaternary structure, homododecamer.

The protein localises to the virion. In terms of biological role, forms the portal vertex of the capsid. This portal plays critical roles in head assembly, genome packaging, neck/tail attachment, and genome ejection. The portal protein multimerizes as a single ring-shaped homododecamer arranged around a central channel. This chain is Portal protein, found in Salmonella typhimurium (Bacteriophage SP6).